Consider the following 108-residue polypeptide: Nascent polypeptide-associated complex protein (108 aa).

One can recognise an NAC-A/B domain in the interval 1–68 (MNPREIRRMM…LREVKKEVEQ (68 aa)).

Belongs to the NAC-alpha family. Homodimer. Interacts with the ribosome. Binds ribosomal RNA.

Contacts the emerging nascent chain on the ribosome. This chain is Nascent polypeptide-associated complex protein, found in Picrophilus torridus (strain ATCC 700027 / DSM 9790 / JCM 10055 / NBRC 100828 / KAW 2/3).